The primary structure comprises 893 residues: UPF0182 protein CLB_0018 (893 aa).

7 helical membrane-spanning segments follow: residues 9-29 (IPLFIIILFIAFFNKIINFII), 49-69 (AIIILMIPIFIIFFISIWMYY), 94-114 (LFFIFNFIVSIFLAYIFSSSY), 154-174 (VIISLLLFLVITTFIAYFILE), 202-222 (LAIVSGLIILFISFGHLIKIW), 246-266 (FYKIIVVITLISSIVTLLSIV), and 273-293 (VSICIGITIFLIVSQNIASFL).

It belongs to the UPF0182 family.

Its subcellular location is the cell membrane. The chain is UPF0182 protein CLB_0018 from Clostridium botulinum (strain ATCC 19397 / Type A).